We begin with the raw amino-acid sequence, 112 residues long: UPF0102 protein TTHA0372 (112 aa).

The protein belongs to the UPF0102 family.

In Thermus thermophilus (strain ATCC 27634 / DSM 579 / HB8), this protein is UPF0102 protein TTHA0372.